A 148-amino-acid polypeptide reads, in one-letter code: Large ribosomal subunit protein uL15 (148 aa).

Basic residues predominate over residues 1-30 (MPSKLRKTRKLRGHVSHGHGRIGKHRKHPG). The interval 1–38 (MPSKLRKTRKLRGHVSHGHGRIGKHRKHPGGRGNAGGM) is disordered.

It belongs to the universal ribosomal protein uL15 family. In terms of assembly, component of the large ribosomal subunit.

The protein resides in the cytoplasm. Functionally, component of the large ribosomal subunit. The ribosome is a large ribonucleoprotein complex responsible for the synthesis of proteins in the cell. The chain is Large ribosomal subunit protein uL15 (rpl27a) from Xenopus laevis (African clawed frog).